Consider the following 517-residue polypeptide: Endoglucanase A (517 aa).

The first 25 residues, 1-25 (MKRSLLKTCSIIAGATIIFSSLSIS), serve as a signal peptide directing secretion. E185 (proton donor) is an active-site residue. Catalysis depends on E309, which acts as the Nucleophile. Positions 382-392 (HPEATEDDKPS) are enriched in basic and acidic residues. Residues 382 to 424 (HPEATEDDKPSTDVTNPDSGNTKPDSGNTNPGTETTTPTDNEK) are disordered. Residues 393–407 (TDVTNPDSGNTKPDS) are compositionally biased toward polar residues. Residues 408-420 (GNTNPGTETTTPT) are compositionally biased toward low complexity. A CBM2 domain is found at 416-517 (TTTPTDNEKI…VISNFEYKFD (102 aa)).

Belongs to the glycosyl hydrolase 5 (cellulase A) family.

It carries out the reaction Endohydrolysis of (1-&gt;4)-beta-D-glucosidic linkages in cellulose, lichenin and cereal beta-D-glucans.. Functionally, hydrolyzes barley beta-glucan, lichenan, carboxymethylcellulose and xylan. It shows preferential activity against the larger cellooligosaccharides (cellohexaose and cellopentaose); cellotetraose is the smallest substrate degraded completely. This chain is Endoglucanase A (celA), found in Clostridium longisporum.